Consider the following 187-residue polypeptide: MNGLFLFCVATTAALAYGSDAPCTNSGGVCQDDHLACHNGHYQSGLCTGGAHRRCCLTSASHTGSFSTGIVSQQCLQCICNVESGCKAIGCHFDVNSDSCGYFQIKEGYWHDCGSPGSSWRSCANDLACASKCVQAYMSRYIGFSGCSHSCESYARIHNGGPAGCKHTNTLGYWSHVHAQGCSHNSK.

Residues 1 to 18 form the signal peptide; sequence MNGLFLFCVATTAALAYG. In terms of domain architecture, I-type lysozyme spans 68 to 183; it reads TGIVSQQCLQ…WSHVHAQGCS (116 aa). Disulfide bonds link Cys-75–Cys-151, Cys-80–Cys-86, Cys-91–Cys-100, Cys-113–Cys-133, Cys-123–Cys-129, and Cys-147–Cys-165. Glu-83 acts as the Proton donor in catalysis. Asp-94 acts as the Nucleophile in catalysis. 106 to 112 provides a ligand contact to substrate; it reads KEGYWHD. Substrate is bound by residues Tyr-137 and 158–160; that span reads HNG.

Highest levels of expression detected in the digestive glands. Lower levels in the mantle, labial palps, gills and style-midgut sac, and lowest levels detected in the hemocytes. Not detected in the gonads.

Its subcellular location is the secreted. The enzyme catalyses Hydrolysis of (1-&gt;4)-beta-linkages between N-acetylmuramic acid and N-acetyl-D-glucosamine residues in a peptidoglycan and between N-acetyl-D-glucosamine residues in chitodextrins.. Functionally, has antibacterial activity against the Gram-negative bacterium E.coli. No antibacterial activity detected against the Gram-negative bacterium V.vulnificus. In Crassostrea virginica (Eastern oyster), this protein is Lysozyme 3.